We begin with the raw amino-acid sequence, 195 residues long: Holliday junction branch migration complex subunit RuvA (195 aa).

Residues 1-64 (MIKGVEGEIT…DRAPEIYGFK (64 aa)) are domain I. The segment at 65–137 (DRAEYNVFLM…LYDLVKDYAV (73 aa)) is domain II. Residues 137-141 (VEFPK) are flexible linker. The tract at residues 142–195 (ELSDVSEDAVGALTALGFDMTSAKLAVNEVLKEQTVENTQELVRKALRKLNKTR) is domain III.

This sequence belongs to the RuvA family. As to quaternary structure, homotetramer. Forms an RuvA(8)-RuvB(12)-Holliday junction (HJ) complex. HJ DNA is sandwiched between 2 RuvA tetramers; dsDNA enters through RuvA and exits via RuvB. An RuvB hexamer assembles on each DNA strand where it exits the tetramer. Each RuvB hexamer is contacted by two RuvA subunits (via domain III) on 2 adjacent RuvB subunits; this complex drives branch migration. In the full resolvosome a probable DNA-RuvA(4)-RuvB(12)-RuvC(2) complex forms which resolves the HJ.

Its subcellular location is the cytoplasm. Its function is as follows. The RuvA-RuvB-RuvC complex processes Holliday junction (HJ) DNA during genetic recombination and DNA repair, while the RuvA-RuvB complex plays an important role in the rescue of blocked DNA replication forks via replication fork reversal (RFR). RuvA specifically binds to HJ cruciform DNA, conferring on it an open structure. The RuvB hexamer acts as an ATP-dependent pump, pulling dsDNA into and through the RuvAB complex. HJ branch migration allows RuvC to scan DNA until it finds its consensus sequence, where it cleaves and resolves the cruciform DNA. This chain is Holliday junction branch migration complex subunit RuvA, found in Kosmotoga olearia (strain ATCC BAA-1733 / DSM 21960 / TBF 19.5.1).